A 161-amino-acid chain; its full sequence is Allophycocyanin subunit alpha-B (161 aa).

Asn-71 is subject to N4-methylasparagine. Residue Cys-81 coordinates (2R,3E)-phycocyanobilin.

The protein belongs to the phycobiliprotein family. As to quaternary structure, heterohexamer of two alpha chains, one alpha-B chain and three beta chains. In terms of processing, contains one covalently linked bilin chromophore.

Its subcellular location is the cellular thylakoid membrane. Its function is as follows. Light-harvesting photosynthetic bile pigment-protein from the phycobiliprotein complex. Allophycocyanin has a maximum absorption at approximately 654 nanometers. The protein is Allophycocyanin subunit alpha-B (apcD) of Synechocystis sp. (strain ATCC 27184 / PCC 6803 / Kazusa).